The following is a 526-amino-acid chain: MAEVNPAEVSAILKQQLSGFESKASLDEVGTVLTVGDGIANVYGLANAQYGELVQFESGLEGIVLNLEEDNVGVVLLGPANEIKESSTVKRTQRIASINVGEGIVGRVVDTLGAPIDGKGAIEGETFEMPLERKAPGVIYRQPVTEPLQTGIKSIDAMVPVGRGQRELVIGDRQTGKTTVCIDTILNQKEFYDAGEPVYCIYVAIGQKASTVAAIAKTLEDKGALAYTTIVAANASDPAPMQVYAPFAGAAIGEYFRDTGRPALIVFDDLSKQAVAYREVSLLLRRPPGREAYPGDVFFLHSRLLERSAKVIDDDGIAKQMNDLPESLKDKVKGGGSLTALPIIETQAGDVSAYIPTNVISITDGQIFLTSDLFNSGVRPAIDVGISVSRVGGNAQIKSMKKVAGTLKLDQAQYRELEAFAKFGSDLDPTTMSVISKGKRNVEILKQGQNDPYPVENQIAIIYAGSKNLLRDVPVEKVKEFERDYLAYLDTKHRDTLDTLKAGKLTDEVIDTLTQTAKELSAKYKN.

171 to 178 (GDRQTGKT) is an ATP binding site.

This sequence belongs to the ATPase alpha/beta chains family. As to quaternary structure, F-type ATPases have 2 components, CF(1) - the catalytic core - and CF(0) - the membrane proton channel. CF(1) has five subunits: alpha(3), beta(3), gamma(1), delta(1), epsilon(1). CF(0) has three main subunits: a(1), b(2) and c(9-12). The alpha and beta chains form an alternating ring which encloses part of the gamma chain. CF(1) is attached to CF(0) by a central stalk formed by the gamma and epsilon chains, while a peripheral stalk is formed by the delta and b chains.

It localises to the cell membrane. The enzyme catalyses ATP + H2O + 4 H(+)(in) = ADP + phosphate + 5 H(+)(out). In terms of biological role, produces ATP from ADP in the presence of a proton gradient across the membrane. The alpha chain is a regulatory subunit. The polypeptide is ATP synthase subunit alpha (Christiangramia forsetii (strain DSM 17595 / CGMCC 1.15422 / KT0803) (Gramella forsetii)).